We begin with the raw amino-acid sequence, 389 residues long: Chalcone synthase 4-1 (389 aa).

Cys-164 is an active-site residue.

The protein belongs to the thiolase-like superfamily. Chalcone/stilbene synthases family.

It carries out the reaction (E)-4-coumaroyl-CoA + 3 malonyl-CoA + 3 H(+) = 2',4,4',6'-tetrahydroxychalcone + 3 CO2 + 4 CoA. It participates in secondary metabolite biosynthesis; flavonoid biosynthesis. The primary product of this enzyme is 4,2',4',6'-tetrahydroxychalcone (also termed naringenin-chalcone or chalcone) which can under specific conditions spontaneously isomerize into naringenin. This chain is Chalcone synthase 4-1 (CHS4-1), found in Medicago sativa (Alfalfa).